The sequence spans 260 residues: Snake venom serine protease homolog 1 (260 aa).

An N-terminal signal peptide occupies residues 1–18 (MVLIRVLANLLILQLSYA). Residues 19–24 (QKSSEL) constitute a propeptide that is removed on maturation. Residues 25–251 (IIGGDECNIN…HLDWIKSIIA (227 aa)) enclose the Peptidase S1 domain. 6 disulfide bridges follow: Cys-31–Cys-165, Cys-52–Cys-68, Cys-100–Cys-258, Cys-144–Cys-212, Cys-176–Cys-191, and Cys-202–Cys-227. Residues Asn-83, Asn-123, and Asn-124 are each glycosylated (N-linked (GlcNAc...) asparagine).

Belongs to the peptidase S1 family. Snake venom subfamily. Expressed by the venom gland.

Its subcellular location is the secreted. In terms of biological role, snake venom serine protease homolog that may act in the hemostasis system of the prey. In Trimeresurus stejnegeri (Chinese green tree viper), this protein is Snake venom serine protease homolog 1.